Consider the following 802-residue polypeptide: MEFSEKWLLDWLGFSISNVFYEQMTKSGIEVEAIAKISKNFERVIVGEVVERLYVNTMHNIVFLRVKLSEKKMIFSISSNDIEFSRGTKIAIATQDSKLFNNRLISMLRFKEKISEGMVCSFKDLGILNIKNKIVEICSEVPVGTDISKFLWFDDDRIIKVSSAPNRADGMSILGIARDMSALNNLCLPTLKEYHINITNHEKFRILINIPDVCLNFIGRTIQSVNLNRQTPLWILERLRRSSISSENVLVDIINYVLIELGQPIFSFNIHGIVQNIIIRTARDNEQFFDSCSQRVPIDKRTILLSDDKEILVLGNHTNSYNSRLSLSSHNIFLGCALFNPEYINNDSHFNFGFKNKITEYYSRGVDSDIQYKALNYVTYLVLKICGGNASNVVLANSSRVTVIQKKIFVLKKTLHRYVNNIISDTLVVKYLLQLGYLVEKQKHCWLVIPPSWRFDIQIQEDVISDLVRVFGYHNIPACALVTNYKLVHDDNIYTSLNRIKLLLVDLGYNEVITYSFVDSQIQKYLFPKRKQFFLLNPISRKMSSMRLSLWNGLLSSVLYNQNRQEKVMRFFESGLCFEEDGNEYLGVKQDLYLAGVISGYKNETDWRSFNKIVSFYDLKGDIELIMALLRKLDKVSFKKMLFQNLCPKQSAAIYFEREMIGVIGVISSNISKKMGLKYKTIVFELIWKKIAQSNDYRIRDVSLYPRCSRDISIIVNDSIAADEILKVSKNVFLDKIVEVKLFDVFYGKNVGLNKKSLSLRFIFGSSKRTLSEEIISNCLNECIRILQEKFNAILRDRNFLF.

The tRNA-binding domain occupies 38-148 (SKNFERVIVG…SEVPVGTDIS (111 aa)). In terms of domain architecture, B5 spans 403 to 478 (VIQKKIFVLK…RVFGYHNIPA (76 aa)). Mg(2+) is bound by residues Asp456, Asp462, and Asp466. The FDX-ACB domain maps to 703 to 796 (SLYPRCSRDI…LQEKFNAILR (94 aa)).

It belongs to the phenylalanyl-tRNA synthetase beta subunit family. Type 1 subfamily. As to quaternary structure, tetramer of two alpha and two beta subunits. Requires Mg(2+) as cofactor.

It is found in the cytoplasm. It carries out the reaction tRNA(Phe) + L-phenylalanine + ATP = L-phenylalanyl-tRNA(Phe) + AMP + diphosphate + H(+). The sequence is that of Phenylalanine--tRNA ligase beta subunit from Buchnera aphidicola subsp. Baizongia pistaciae (strain Bp).